The chain runs to 432 residues: Trigger factor (432 aa).

The region spanning 161–246 (DDRVTIDFVG…LKKIENMVLP (86 aa)) is the PPIase FKBP-type domain.

The protein belongs to the FKBP-type PPIase family. Tig subfamily.

It localises to the cytoplasm. The enzyme catalyses [protein]-peptidylproline (omega=180) = [protein]-peptidylproline (omega=0). Its function is as follows. Involved in protein export. Acts as a chaperone by maintaining the newly synthesized protein in an open conformation. Functions as a peptidyl-prolyl cis-trans isomerase. The sequence is that of Trigger factor from Haemophilus influenzae (strain PittEE).